The primary structure comprises 362 residues: Acetylglutamate kinase (362 aa).

The span at 1 to 11 (MNAPTRTPPPS) shows a compositional bias: pro residues. Residues 1-42 (MNAPTRTPPPSNGGHGSTGSTGSTGDAAPGGGTGRGPAATAR) are disordered. Substrate is bound by residues 106–107 (GG), arginine 128, and asparagine 227. The interval 329–362 (MAESGTSPEPGTPPAPAARPAGIVPAGEPTGGTP) is disordered. Over residues 346–355 (ARPAGIVPAG) the composition is skewed to low complexity.

The protein belongs to the acetylglutamate kinase family. ArgB subfamily.

The protein localises to the cytoplasm. The enzyme catalyses N-acetyl-L-glutamate + ATP = N-acetyl-L-glutamyl 5-phosphate + ADP. It functions in the pathway amino-acid biosynthesis; L-arginine biosynthesis; N(2)-acetyl-L-ornithine from L-glutamate: step 2/4. In terms of biological role, catalyzes the ATP-dependent phosphorylation of N-acetyl-L-glutamate. This is Acetylglutamate kinase from Frankia casuarinae (strain DSM 45818 / CECT 9043 / HFP020203 / CcI3).